A 256-amino-acid polypeptide reads, in one-letter code: Probable elongation factor 1-delta (256 aa).

3 positions are modified to phosphoserine: serine 37, serine 53, and serine 89. A disordered region spans residues 110–146 (NGVSKEPEVEAKKPEANDDDDDVDLFGSDSEEEDGEA). The segment covering 114–125 (KEPEVEAKKPEA) has biased composition (basic and acidic residues). Residues 126–144 (NDDDDDVDLFGSDSEEEDG) show a composition bias toward acidic residues. Phosphoserine occurs at positions 137 and 139.

It belongs to the EF-1-beta/EF-1-delta family. EF-1 is composed of 4 subunits: alpha, beta, delta, and gamma.

In terms of biological role, EF-1-beta and EF-1-delta stimulate the exchange of GDP bound to EF-1-alpha to GTP. The polypeptide is Probable elongation factor 1-delta (eEF1delta) (Drosophila melanogaster (Fruit fly)).